Here is a 404-residue protein sequence, read N- to C-terminus: Tryptophan synthase beta chain (404 aa).

K95 is modified (N6-(pyridoxal phosphate)lysine).

The protein belongs to the TrpB family. Tetramer of two alpha and two beta chains. Pyridoxal 5'-phosphate serves as cofactor.

The enzyme catalyses (1S,2R)-1-C-(indol-3-yl)glycerol 3-phosphate + L-serine = D-glyceraldehyde 3-phosphate + L-tryptophan + H2O. The protein operates within amino-acid biosynthesis; L-tryptophan biosynthesis; L-tryptophan from chorismate: step 5/5. The beta subunit is responsible for the synthesis of L-tryptophan from indole and L-serine. The polypeptide is Tryptophan synthase beta chain (trpB) (Thermus thermophilus (strain ATCC BAA-163 / DSM 7039 / HB27)).